The primary structure comprises 993 residues: Serine/threonine-protein phosphatase 6 regulatory ankyrin repeat subunit B (993 aa).

ANK repeat units follow at residues Cys7–Ala36, Glu40–Ala69, Met73–Ala102, Asn106–Val135, Gly139–Ala168, Lys172–Cys201, Lys205–Glu234, Tyr238–Gln267, Ser271–Ile301, Asp305–Cys334, Asp338–Lys367, His371–Thr400, Phe404–Lys433, Cys437–Glu466, Trp470–Glu498, Glu531–Glu561, Ala566–Ile595, Lys599–Val628, Thr633–Val662, Lys669–Ala698, Val702–Cys731, Arg735–Asp764, Gln771–Phe800, Asn803–Val832, Lys838–Ala867, Ser871–Val901, Asp905–Leu934, and Ala941–Ala970. Residues Asn974–Glu993 form a disordered region.

Protein phosphatase 6 (PP6) holoenzyme is proposed to be a heterotrimeric complex formed by the catalytic subunit, a SAPS domain-containing subunit (PP6R) and an ankyrin repeat-domain containing regulatory subunit (ARS). Interacts with PPP6R1.

In terms of biological role, putative regulatory subunit of protein phosphatase 6 (PP6) that may be involved in the recognition of phosphoprotein substrates. This Mus musculus (Mouse) protein is Serine/threonine-protein phosphatase 6 regulatory ankyrin repeat subunit B (Ankrd44).